The following is a 506-amino-acid chain: 2-isopropylmalate synthase (506 aa).

Positions 4-266 (ILFMDTTLRD…EPSMTLKEIK (263 aa)) constitute a Pyruvate carboxyltransferase domain. Mn(2+)-binding residues include Asp-13, His-201, His-203, and Asn-237. The regulatory domain stretch occupies residues 390 to 506 (NITQLQVHFV…KLKSFIQLVK (117 aa)).

It belongs to the alpha-IPM synthase/homocitrate synthase family. LeuA type 1 subfamily. In terms of assembly, homodimer. Mn(2+) is required as a cofactor.

It is found in the cytoplasm. It carries out the reaction 3-methyl-2-oxobutanoate + acetyl-CoA + H2O = (2S)-2-isopropylmalate + CoA + H(+). The protein operates within amino-acid biosynthesis; L-leucine biosynthesis; L-leucine from 3-methyl-2-oxobutanoate: step 1/4. In terms of biological role, catalyzes the condensation of the acetyl group of acetyl-CoA with 3-methyl-2-oxobutanoate (2-ketoisovalerate) to form 3-carboxy-3-hydroxy-4-methylpentanoate (2-isopropylmalate). This is 2-isopropylmalate synthase from Bacillus anthracis (strain A0248).